Here is a 207-residue protein sequence, read N- to C-terminus: Outer-membrane lipoprotein LolB (207 aa).

The signal sequence occupies residues 1–23 (MINLRRFTKFTLAGLTALSLLGG). A lipid anchor (N-palmitoyl cysteine) is attached at Cys24. The S-diacylglycerol cysteine moiety is linked to residue Cys24.

It belongs to the LolB family. As to quaternary structure, monomer.

Its subcellular location is the cell outer membrane. Functionally, plays a critical role in the incorporation of lipoproteins in the outer membrane after they are released by the LolA protein. In Shewanella amazonensis (strain ATCC BAA-1098 / SB2B), this protein is Outer-membrane lipoprotein LolB.